A 333-amino-acid chain; its full sequence is Acetyl-coenzyme A carboxylase carboxyl transferase subunit alpha (333 aa).

The 261-residue stretch at 48 to 308 folds into the CoA carboxyltransferase C-terminal domain; it reads ALEVKVETLR…KEMLIEELRI (261 aa).

This sequence belongs to the AccA family. Acetyl-CoA carboxylase is a heterohexamer composed of biotin carboxyl carrier protein (AccB), biotin carboxylase (AccC) and two subunits each of ACCase subunit alpha (AccA) and ACCase subunit beta (AccD).

Its subcellular location is the cytoplasm. It carries out the reaction N(6)-carboxybiotinyl-L-lysyl-[protein] + acetyl-CoA = N(6)-biotinyl-L-lysyl-[protein] + malonyl-CoA. It participates in lipid metabolism; malonyl-CoA biosynthesis; malonyl-CoA from acetyl-CoA: step 1/1. Its function is as follows. Component of the acetyl coenzyme A carboxylase (ACC) complex. First, biotin carboxylase catalyzes the carboxylation of biotin on its carrier protein (BCCP) and then the CO(2) group is transferred by the carboxyltransferase to acetyl-CoA to form malonyl-CoA. This Chlorobium phaeobacteroides (strain DSM 266 / SMG 266 / 2430) protein is Acetyl-coenzyme A carboxylase carboxyl transferase subunit alpha.